The following is a 167-amino-acid chain: Ubiquitin-conjugating enzyme E2 15 (167 aa).

In terms of domain architecture, UBC core spans 5–165; sequence ASEQLLRKQL…VRRLVRRSIE (161 aa). The active-site Glycyl thioester intermediate is cysteine 90.

It belongs to the ubiquitin-conjugating enzyme family.

The catalysed reaction is S-ubiquitinyl-[E1 ubiquitin-activating enzyme]-L-cysteine + [E2 ubiquitin-conjugating enzyme]-L-cysteine = [E1 ubiquitin-activating enzyme]-L-cysteine + S-ubiquitinyl-[E2 ubiquitin-conjugating enzyme]-L-cysteine.. It functions in the pathway protein modification; protein ubiquitination. In terms of biological role, catalyzes the covalent attachment of ubiquitin to other proteins. Has a role in the formation of chromatin structures that influence the localization of transcriptional silencing factors. The protein is Ubiquitin-conjugating enzyme E2 15 (ubc15) of Schizosaccharomyces pombe (strain 972 / ATCC 24843) (Fission yeast).